Consider the following 153-residue polypeptide: UPF0756 membrane protein lmo1568 (153 aa).

4 consecutive transmembrane segments (helical) span residues 6–26, 54–74, 80–100, and 117–137; these read MLFL…SLII, WGVT…QIGF, SFKS…SILA, and LVFG…GPVI.

This sequence belongs to the UPF0756 family.

It is found in the cell membrane. The chain is UPF0756 membrane protein lmo1568 from Listeria monocytogenes serovar 1/2a (strain ATCC BAA-679 / EGD-e).